The primary structure comprises 837 residues: AdoMet-dependent rRNA methyltransferase SPB1 (837 aa).

S-adenosyl-L-methionine contacts are provided by glycine 58, tryptophan 60, aspartate 78, aspartate 94, and aspartate 119. Lysine 159 functions as the Proton acceptor in the catalytic mechanism. Positions 345–390 (LNEEEQIEKELRDLQEKQKQKQKREKRRKNEEKQKELTRMQMNMLT) form a coiled coil. Disordered regions lie at residues 359-381 (QEKQ…QKEL), 483-529 (FRAK…DEDD), 573-644 (TDDV…TTKE), and 779-808 (TKKQ…KGIK). A compositionally biased stretch (basic and acidic residues) spans 372 to 381 (RKNEEKQKEL). The segment covering 518 to 529 (ESDDSELSDEDD) has biased composition (acidic residues). The segment covering 593-602 (SYNEMKKEDL) has biased composition (basic and acidic residues). Positions 603–635 (SDSSDEDSSSESDFEIVANDESDGDIDSDYDSD) are enriched in acidic residues.

It belongs to the class I-like SAM-binding methyltransferase superfamily. RNA methyltransferase RlmE family. SPB1 subfamily. As to quaternary structure, component of the nucleolar and nucleoplasmic pre-60S ribosomal particle.

The protein resides in the nucleus. The protein localises to the nucleolus. It catalyses the reaction a ribonucleotide in rRNA + S-adenosyl-L-methionine = a 2'-O-methylribonucleotide in rRNA + S-adenosyl-L-homocysteine + H(+). Functionally, required for proper assembly of pre-ribosomal particles during the biogenesis of the 60S ribosomal subunit. This Candida glabrata (strain ATCC 2001 / BCRC 20586 / JCM 3761 / NBRC 0622 / NRRL Y-65 / CBS 138) (Yeast) protein is AdoMet-dependent rRNA methyltransferase SPB1.